The chain runs to 167 residues: Small ribosomal subunit protein uS5 (167 aa).

An S5 DRBM domain is found at 12 to 75; that stretch reads LQEKLIAVNR…EKARRNMVTV (64 aa).

Belongs to the universal ribosomal protein uS5 family. Part of the 30S ribosomal subunit. Contacts proteins S4 and S8.

Its function is as follows. With S4 and S12 plays an important role in translational accuracy. Located at the back of the 30S subunit body where it stabilizes the conformation of the head with respect to the body. In Shewanella denitrificans (strain OS217 / ATCC BAA-1090 / DSM 15013), this protein is Small ribosomal subunit protein uS5.